Consider the following 84-residue polypeptide: Large ribosomal subunit protein bL27 (84 aa).

Residues 1–21 (MAHKKGGGSTKNGRDSNPKYL) form a disordered region.

The protein belongs to the bacterial ribosomal protein bL27 family.

The protein is Large ribosomal subunit protein bL27 of Pelodictyon phaeoclathratiforme (strain DSM 5477 / BU-1).